The following is a 319-amino-acid chain: MTILAWCIAWVLDFIIGDPQHWPHPVRWIGRLITFVQRIVRRYCPGDKALRIGGGVMWVVVVGVTWGVAWGVLALAQRIHPWFGWSVEVWMIFTTLAGRSLARAAQEFERPLRENDLAESRIKLSWIVGRDTSQLQPAQINRAVVETVAENTVDGIIAPLFFLFLGGAPLAMAYKAVNTLDSMVGYKHEKYRAIGMVSARMDDVANYLPARLSWLLLGIAAGLCRLSDWRALRIGWRDRYNHSSPNCAWSEACVAGALGIQLGGPNNYFGERVDKPWIGDAQRGISVDDISRTIRLMWVASTLALALFIAARCGLSGVA.

The next 4 helical transmembrane spans lie at 56–76 (VMWV…LALA), 82–102 (WFGW…RSLA), 153–173 (VDGI…LAMA), and 296–316 (LMWV…CGLS).

Belongs to the CobD/CbiB family.

The protein resides in the cell membrane. Its pathway is cofactor biosynthesis; adenosylcobalamin biosynthesis. Its function is as follows. Converts cobyric acid to cobinamide by the addition of aminopropanol on the F carboxylic group. However, the true cosubstrate could be (R)-1-amino-2-propanol O-2-phosphate, leading to cobinamide phosphate. The sequence is that of Cobalamin biosynthesis protein CbiB from Salmonella paratyphi A (strain ATCC 9150 / SARB42).